We begin with the raw amino-acid sequence, 59 residues long: Large ribosomal subunit protein bL32 (59 aa).

The tract at residues 1–59 is disordered; sequence MAVQQNRKTRSKRGMRRSHDALSAAALSTDATTGEVHRRHHVSPDGFYRGKQVVEARDE. Positions 7–16 are enriched in basic residues; the sequence is RKTRSKRGMR. Residues 21 to 33 are compositionally biased toward low complexity; the sequence is ALSAAALSTDATT.

The protein belongs to the bacterial ribosomal protein bL32 family.

In Marinobacter nauticus (strain ATCC 700491 / DSM 11845 / VT8) (Marinobacter aquaeolei), this protein is Large ribosomal subunit protein bL32.